Consider the following 257-residue polypeptide: Imidazole glycerol phosphate synthase subunit HisF (257 aa).

Active-site residues include Asp11 and Asp130.

The protein belongs to the HisA/HisF family. As to quaternary structure, heterodimer of HisH and HisF.

The protein resides in the cytoplasm. It carries out the reaction 5-[(5-phospho-1-deoxy-D-ribulos-1-ylimino)methylamino]-1-(5-phospho-beta-D-ribosyl)imidazole-4-carboxamide + L-glutamine = D-erythro-1-(imidazol-4-yl)glycerol 3-phosphate + 5-amino-1-(5-phospho-beta-D-ribosyl)imidazole-4-carboxamide + L-glutamate + H(+). The protein operates within amino-acid biosynthesis; L-histidine biosynthesis; L-histidine from 5-phospho-alpha-D-ribose 1-diphosphate: step 5/9. Its function is as follows. IGPS catalyzes the conversion of PRFAR and glutamine to IGP, AICAR and glutamate. The HisF subunit catalyzes the cyclization activity that produces IGP and AICAR from PRFAR using the ammonia provided by the HisH subunit. The chain is Imidazole glycerol phosphate synthase subunit HisF from Shewanella baltica (strain OS223).